Consider the following 209-residue polypeptide: Ribonuclease HII (209 aa).

An RNase H type-2 domain is found at 7 to 198; it reads GPVAGVDEAG…VAKAHQEWLH (192 aa). A divalent metal cation contacts are provided by D13, E14, and D107.

Belongs to the RNase HII family. Mn(2+) serves as cofactor. The cofactor is Mg(2+).

Its subcellular location is the cytoplasm. The catalysed reaction is Endonucleolytic cleavage to 5'-phosphomonoester.. Functionally, endonuclease that specifically degrades the RNA of RNA-DNA hybrids. The chain is Ribonuclease HII from Corynebacterium glutamicum (strain R).